The chain runs to 572 residues: Arginine--tRNA ligase (572 aa).

The 'HIGH' region motif lies at 122–132 (PNLAKEMHVGH).

It belongs to the class-I aminoacyl-tRNA synthetase family. As to quaternary structure, monomer.

It localises to the cytoplasm. The catalysed reaction is tRNA(Arg) + L-arginine + ATP = L-arginyl-tRNA(Arg) + AMP + diphosphate. The chain is Arginine--tRNA ligase from Neisseria meningitidis serogroup A / serotype 4A (strain DSM 15465 / Z2491).